The primary structure comprises 239 residues: Ribosomal RNA small subunit methyltransferase G (239 aa).

S-adenosyl-L-methionine contacts are provided by residues Gly-79, Phe-84, 130–131, and Arg-149; that span reads AE. A disordered region spans residues 218 to 239; it reads KKTKTPKKYPRQAGTPSKKPIS.

The protein belongs to the methyltransferase superfamily. RNA methyltransferase RsmG family.

It is found in the cytoplasm. In terms of biological role, specifically methylates the N7 position of a guanine in 16S rRNA. In Leuconostoc mesenteroides subsp. mesenteroides (strain ATCC 8293 / DSM 20343 / BCRC 11652 / CCM 1803 / JCM 6124 / NCDO 523 / NBRC 100496 / NCIMB 8023 / NCTC 12954 / NRRL B-1118 / 37Y), this protein is Ribosomal RNA small subunit methyltransferase G.